The primary structure comprises 306 residues: Phosphoadenosine phosphosulfate reductase (306 aa).

2 disordered regions span residues 1–30 and 245–266; these read MPAK…VSGG and YHST…KGQA.

Belongs to the PAPS reductase family. CysH subfamily.

The enzyme catalyses [thioredoxin]-disulfide + sulfite + adenosine 3',5'-bisphosphate + 2 H(+) = [thioredoxin]-dithiol + 3'-phosphoadenylyl sulfate. The protein operates within sulfur metabolism; hydrogen sulfide biosynthesis; sulfite from sulfate: step 3/3. Functionally, the NADP dependent reduction of PAPS into sulfite involves thioredoxin which probably plays the role of a thiol carrier. The polypeptide is Phosphoadenosine phosphosulfate reductase (sA) (Emericella nidulans (strain FGSC A4 / ATCC 38163 / CBS 112.46 / NRRL 194 / M139) (Aspergillus nidulans)).